The primary structure comprises 570 residues: Sulfite reductase [NADPH] hemoprotein beta-component (570 aa).

Cysteine 434, cysteine 440, cysteine 479, and cysteine 483 together coordinate [4Fe-4S] cluster. Cysteine 483 lines the siroheme pocket.

Belongs to the nitrite and sulfite reductase 4Fe-4S domain family. Alpha(8)-beta(8). The alpha component is a flavoprotein, the beta component is a hemoprotein. Requires siroheme as cofactor. It depends on [4Fe-4S] cluster as a cofactor.

The enzyme catalyses hydrogen sulfide + 3 NADP(+) + 3 H2O = sulfite + 3 NADPH + 4 H(+). It participates in sulfur metabolism; hydrogen sulfide biosynthesis; hydrogen sulfide from sulfite (NADPH route): step 1/1. Component of the sulfite reductase complex that catalyzes the 6-electron reduction of sulfite to sulfide. This is one of several activities required for the biosynthesis of L-cysteine from sulfate. The sequence is that of Sulfite reductase [NADPH] hemoprotein beta-component from Salmonella dublin (strain CT_02021853).